The following is a 218-amino-acid chain: Superoxide dismutase [Mn], mitochondrial (218 aa).

A mitochondrion-targeting transit peptide spans 1–21 (MLRFLSKNSVAAIRNVSIARG). Positions 50 and 96 each coordinate Mn(2+). Position 129 is a phosphoserine (S129). Positions 181 and 185 each coordinate Mn(2+).

It belongs to the iron/manganese superoxide dismutase family. Homodimer. Mn(2+) is required as a cofactor.

Its subcellular location is the mitochondrion matrix. The catalysed reaction is 2 superoxide + 2 H(+) = H2O2 + O2. In terms of biological role, destroys superoxide anion radicals which are normally produced within the cells and which are toxic to biological systems. This is Superoxide dismutase [Mn], mitochondrial (sod2) from Schizosaccharomyces pombe (strain 972 / ATCC 24843) (Fission yeast).